The chain runs to 413 residues: Serine/threonine transporter SstT (413 aa).

Transmembrane regions (helical) follow at residues 15–35, 48–68, 82–102, 141–161, 178–198, 216–236, 290–310, 330–350, and 357–377; these read NIVI…TLAP, FVSA…AASI, VIVL…VMSF, ALMT…GLGL, CISA…FGLV, LLAV…PLIV, IPLG…VLTL, LVAA…LLLI, and FGIS…IGVV.

Belongs to the dicarboxylate/amino acid:cation symporter (DAACS) (TC 2.A.23) family.

Its subcellular location is the cell inner membrane. The catalysed reaction is L-serine(in) + Na(+)(in) = L-serine(out) + Na(+)(out). The enzyme catalyses L-threonine(in) + Na(+)(in) = L-threonine(out) + Na(+)(out). Functionally, involved in the import of serine and threonine into the cell, with the concomitant import of sodium (symport system). This is Serine/threonine transporter SstT from Aliivibrio fischeri (strain ATCC 700601 / ES114) (Vibrio fischeri).